Consider the following 308-residue polypeptide: Porphobilinogen deaminase (308 aa).

An S-(dipyrrolylmethanemethyl)cysteine modification is found at Cys241.

The protein belongs to the HMBS family. As to quaternary structure, monomer. Dipyrromethane serves as cofactor.

It catalyses the reaction 4 porphobilinogen + H2O = hydroxymethylbilane + 4 NH4(+). The protein operates within porphyrin-containing compound metabolism; protoporphyrin-IX biosynthesis; coproporphyrinogen-III from 5-aminolevulinate: step 2/4. In terms of biological role, tetrapolymerization of the monopyrrole PBG into the hydroxymethylbilane pre-uroporphyrinogen in several discrete steps. The chain is Porphobilinogen deaminase from Staphylococcus epidermidis (strain ATCC 35984 / DSM 28319 / BCRC 17069 / CCUG 31568 / BM 3577 / RP62A).